The following is a 103-amino-acid chain: Seminal ribonuclease (103 aa).

4 cysteine pairs are disulfide-bonded: C12–C70, C26–C81, C44–C96, and C51–C58. Residues 27 to 31 (KLVNT), K52, and R71 each bind substrate.

Belongs to the pancreatic ribonuclease family. In terms of assembly, homodimer; disulfide-linked.

The protein localises to the secreted. It catalyses the reaction an [RNA] containing cytidine + H2O = an [RNA]-3'-cytidine-3'-phosphate + a 5'-hydroxy-ribonucleotide-3'-[RNA].. The catalysed reaction is an [RNA] containing uridine + H2O = an [RNA]-3'-uridine-3'-phosphate + a 5'-hydroxy-ribonucleotide-3'-[RNA].. In terms of biological role, this enzyme hydrolyzes both single- and double-stranded RNA. The protein is Seminal ribonuclease (SRN) of Cephalophus silvicultor (Yellow-backed duiker).